The following is a 114-amino-acid chain: DNA polymerase epsilon subunit C (114 aa).

A disordered region spans residues 91-114 (PDAVAPATGEEEQPKRRGRKPAQE).

As to quaternary structure, heterotetramer. Consists of four subunits: POL2, DPB2, DPB3 and DPB4.

It is found in the nucleus. In terms of biological role, as accessory component of the DNA polymerase epsilon (DNA polymerase II) participates in chromosomal DNA replication. This is DNA polymerase epsilon subunit C (DPB3) from Yarrowia lipolytica (strain CLIB 122 / E 150) (Yeast).